Consider the following 353-residue polypeptide: Fasciculation and elongation protein zeta-2 (353 aa).

The tract at residues 19–49 (SLLDQENCNASPEPGAEAGAEAGGGADGFPA) is disordered. Low complexity predominate over residues 28-38 (ASPEPGAEAGA). Phosphoserine is present on residues Ser135, Ser176, and Ser195. Residues 214 to 286 (KRLSVSELNE…AKKKKKLKNG (73 aa)) are a coiled coil. The segment at 271–300 (KEHKETAKKKKKLKNGSSQNGKNERSHMPG) is disordered.

This sequence belongs to the zygin family. In terms of assembly, homodimer; disulfide-linked. May form heterodimers with FEZ1. Interacts with synaptotagmin. In terms of tissue distribution, expressed in nonneural tissues, such as heart, lung, spleen, muscle, testis, placenta and melanocytes.

Functionally, involved in axonal outgrowth and fasciculation. In Homo sapiens (Human), this protein is Fasciculation and elongation protein zeta-2 (FEZ2).